The following is a 344-amino-acid chain: MEARLKELKQKALELIEEAKELKGLNDVRVAYLGKKGPITEVLRGMGKLSAEERPRMGALVNEVREAIQTRLEDKISNLEKAVIEAKLATETIDVTLPGRPVETGCHHPLTAVVEQIEDVFIGMGYEVAEGTEVEKDYYNFEALNLPKDHPARDMQDTFYITEETLLRTHTSSVQARTMENNKEKGPIKIICPGKVYRRDDDDATHSHQFMQIEGLVIDKNIRMSDLKGTLQVFVKKMFGEDREIRLRPSFFPFTEPSVEMDISCMMCHGKGCGTCKGTGWIEILGAGMVHPNVLEMAGYDSKEYQGFAFGMGAERIAMLKYGVDDIRHFYTNDVRFLQQFKRA.

Glu-256 lines the Mg(2+) pocket.

It belongs to the class-II aminoacyl-tRNA synthetase family. Phe-tRNA synthetase alpha subunit type 1 subfamily. In terms of assembly, tetramer of two alpha and two beta subunits. Requires Mg(2+) as cofactor.

The protein localises to the cytoplasm. The catalysed reaction is tRNA(Phe) + L-phenylalanine + ATP = L-phenylalanyl-tRNA(Phe) + AMP + diphosphate + H(+). This is Phenylalanine--tRNA ligase alpha subunit from Bacillus cereus (strain G9842).